A 173-amino-acid polypeptide reads, in one-letter code: Pectinesterase inhibitor 2 (173 aa).

A signal peptide spans 1-25 (MAAYLTNRVLMSSLMFFVMTGSLNA). A disulfide bridge connects residues Cys-34 and Cys-43. N-linked (GlcNAc...) asparagine glycosylation is found at Asn-39 and Asn-63. Cys-99 and Cys-139 are disulfide-bonded.

Belongs to the PMEI family. Interacts with PPME1. In terms of tissue distribution, highest expression in flowers. Expressed exclusively at the pollen tube tip.

The protein resides in the secreted. The protein localises to the extracellular space. It is found in the apoplast. In terms of biological role, inhibits pectin methylesterase (PME) from flowers, siliques and pollen tube. The sequence is that of Pectinesterase inhibitor 2 from Arabidopsis thaliana (Mouse-ear cress).